Consider the following 159-residue polypeptide: Peptide methionine sulfoxide reductase MsrB (159 aa).

One can recognise a MsrB domain in the interval 22-144 (RERLEANLTA…NSVSLQFVKA (123 aa)). 4 residues coordinate Zn(2+): C61, C64, C110, and C113. C133 functions as the Nucleophile in the catalytic mechanism.

This sequence belongs to the MsrB Met sulfoxide reductase family. Requires Zn(2+) as cofactor.

It catalyses the reaction L-methionyl-[protein] + [thioredoxin]-disulfide + H2O = L-methionyl-(R)-S-oxide-[protein] + [thioredoxin]-dithiol. The polypeptide is Peptide methionine sulfoxide reductase MsrB (Caulobacter vibrioides (strain ATCC 19089 / CIP 103742 / CB 15) (Caulobacter crescentus)).